Here is a 35-residue protein sequence, read N- to C-terminus: Cupiennin-1d (35 aa).

Glutamate 35 carries the post-translational modification Glutamic acid 1-amide.

This sequence belongs to the cationic peptide 04 (cupiennin) family. 01 subfamily. Expressed by the venom gland.

It localises to the secreted. Has antimicrobial activity against B.subtilis, E.coli, E.faecalis, P.aeruginosa, and S.aureus. Has insecticidal and hemolytic activities. Probably acts by disturbing membrane function with its amphipathic structure. This is Cupiennin-1d from Cupiennius salei (American wandering spider).